Consider the following 174-residue polypeptide: Peroxisome assembly protein 22 (174 aa).

Residues glycine 9–tryptophan 27 form a helical membrane-spanning segment.

This sequence belongs to the peroxin-22 family.

Its subcellular location is the peroxisome membrane. Involved in peroxisome biogenesis. The sequence is that of Peroxisome assembly protein 22 (PEX22) from Candida glabrata (strain ATCC 2001 / BCRC 20586 / JCM 3761 / NBRC 0622 / NRRL Y-65 / CBS 138) (Yeast).